A 532-amino-acid polypeptide reads, in one-letter code: Protein DETOXIFICATION 51 (532 aa).

Helical transmembrane passes span 65–85 (FPIAVTALVLYLRSAVSMFFL), 98–118 (LAIAFANITGYSVLSGLALGM), 142–162 (VVFLLVCCVPISVLWFNVGKI), 176–196 (AQTYLIFSLPDLLTNTLLHPI), 208–228 (PVTLASLSGAVFHLPANLFLV), 238–258 (VAVASSITNIFVVAFLVCYVW), 290–310 (VSVCLEWWWYEIMIVLCGLLV), 316–336 (VAAMGVLIQTTSFLYVFPSSL), 358–378 (LTATVAIVFAAVTGIIAAAFA), 395–415 (ILQLTAAALPILGLCEIGNCP), 439–459 (AFYLVGMPVAVGLGFWAGIGF), and 461–481 (GLWVGLLAAQISCAGLMMYVV).

The protein belongs to the multi antimicrobial extrusion (MATE) (TC 2.A.66.1) family. As to expression, expressed in the meristematic regions. Mainly detected in tissues where cells were actively dividing, such as leaf primordia and young leaves, the junction between lateral root and the primary root, root cap, hydathodes, the junction between secondary inflorescence and the main inflorescence, young stamen and young siliques. Highly expressed at the junction between the hypocotyl and the root, and at the marginal areas of cotyledons and true leaves, coinciding with the locations of the hydathode. Also highly expressed at the basal regions of the newly emerged lateral roots. In the floral organs, mostly expressed at the style of the pistil.

It is found in the endosome membrane. The protein localises to the late endosome membrane. In terms of biological role, functions as a multidrug and toxin extrusion transporter that negatively regulates plant disease resistance. Plays an important role in maintaining normal plant architecture, possibly by regulating local auxin biosynthesis. May act as a negative regulator of hypocotyl cell elongation in the light. This Arabidopsis thaliana (Mouse-ear cress) protein is Protein DETOXIFICATION 51.